A 568-amino-acid chain; its full sequence is Periplasmic pectate lyase (568 aa).

An N-terminal signal peptide occupies residues 1–19; that stretch reads MKRFALSLLAGLVALQASA.

The protein belongs to the polysaccharide lyase 2 family.

It is found in the periplasm. It catalyses the reaction Eliminative cleavage of (1-&gt;4)-alpha-D-galacturonan to give oligosaccharides with 4-deoxy-alpha-D-galact-4-enuronosyl groups at their non-reducing ends.. The protein operates within glycan metabolism; pectin degradation; 2-dehydro-3-deoxy-D-gluconate from pectin: step 2/5. The protein is Periplasmic pectate lyase (pelB) of Pectobacterium carotovorum subsp. carotovorum (Erwinia carotovora subsp. carotovora).